We begin with the raw amino-acid sequence, 207 residues long: FMN-dependent NADH:quinone oxidoreductase 1 (207 aa).

FMN is bound by residues Ser9, 15–17 (SIS), and 139–142 (TRGG).

Belongs to the azoreductase type 1 family. In terms of assembly, homodimer. The cofactor is FMN.

The catalysed reaction is 2 a quinone + NADH + H(+) = 2 a 1,4-benzosemiquinone + NAD(+). It catalyses the reaction N,N-dimethyl-1,4-phenylenediamine + anthranilate + 2 NAD(+) = 2-(4-dimethylaminophenyl)diazenylbenzoate + 2 NADH + 2 H(+). Functionally, quinone reductase that provides resistance to thiol-specific stress caused by electrophilic quinones. Its function is as follows. Also exhibits azoreductase activity. Catalyzes the reductive cleavage of the azo bond in aromatic azo compounds to the corresponding amines. This chain is FMN-dependent NADH:quinone oxidoreductase 1, found in Trichormus variabilis (strain ATCC 29413 / PCC 7937) (Anabaena variabilis).